Here is a 136-residue protein sequence, read N- to C-terminus: Large ribosomal subunit protein uL16 (136 aa).

The protein belongs to the universal ribosomal protein uL16 family. As to quaternary structure, part of the 50S ribosomal subunit.

Its function is as follows. Binds 23S rRNA and is also seen to make contacts with the A and possibly P site tRNAs. The sequence is that of Large ribosomal subunit protein uL16 from Rickettsia rickettsii (strain Iowa).